A 160-amino-acid chain; its full sequence is MGVFNYEAETPSVIPAARLFKAFILDGDKLLPKVAPEAVSSVENIEGNGGPGTIKKITFPEGSPFKYVKERVDEVDRVNFKYSFSVIEGGAVGDALEKVCNEIKIVAAPDGGSILKISNKFHTKGDHEINAEQIKIEKEKAVGLLKAVESYLLAHSDAYN.

Belongs to the BetVI family.

This chain is Major pollen allergen Aln g 1, found in Alnus glutinosa (European alder).